A 335-amino-acid chain; its full sequence is MITSQTPITVLGAGSYGTALAITFSRNGSPTHLWGHNPVHIAQMQTERQNYRFLPDVIFPEDLHLESNLAQAMEYSQDILIVVPSHAFGEILIKIKPHLKAHHRLIWATKGLERNTGRLLQTVVEEQLGTQYPLAVLSGPTFAKELAQGLPSAITLAANNEQFAREFQSRIHCSKGFRVYINSDMTGVQLGGAIKNVIAIGAGISDGMGFGANARTALITRGIAEITRLGISLGANTNTFMGMSGLGDLVLTCTDNQSRNRRFGLMLGKGLDAQMAMENIGQVVEGFYNTKEAYLLAQRQGVEMPITEQIYQMLFCGKNAQDVAISLLGRACKGE.

Positions 15, 16, 36, and 110 each coordinate NADPH. Lys-110, Gly-139, and Thr-141 together coordinate sn-glycerol 3-phosphate. Ala-143 contacts NADPH. Sn-glycerol 3-phosphate is bound by residues Lys-195, Asp-248, Ser-258, Arg-259, and Asn-260. Lys-195 serves as the catalytic Proton acceptor. Arg-259 is an NADPH binding site. Residues Val-283 and Glu-285 each contribute to the NADPH site.

It belongs to the NAD-dependent glycerol-3-phosphate dehydrogenase family.

The protein localises to the cytoplasm. The enzyme catalyses sn-glycerol 3-phosphate + NAD(+) = dihydroxyacetone phosphate + NADH + H(+). It carries out the reaction sn-glycerol 3-phosphate + NADP(+) = dihydroxyacetone phosphate + NADPH + H(+). It participates in membrane lipid metabolism; glycerophospholipid metabolism. In terms of biological role, catalyzes the reduction of the glycolytic intermediate dihydroxyacetone phosphate (DHAP) to sn-glycerol 3-phosphate (G3P), the key precursor for phospholipid synthesis. The chain is Glycerol-3-phosphate dehydrogenase [NAD(P)+] from Haemophilus influenzae (strain 86-028NP).